Reading from the N-terminus, the 1270-residue chain is Breakpoint cluster region protein (1270 aa).

Residues 28 to 55 (VGDIEQELERCKASIRRLEQEVNQERFR) adopt a coiled-coil conformation. 4 disordered regions span residues 67–173 (KKSY…SADA), 201–249 (ISSL…DYED), 295–396 (KSPL…RHRQ), and 412–484 (TGQI…LEPT). A compositionally biased stretch (low complexity) spans 126-139 (GRPATARRPAAAAP). Phosphoserine is present on residues S216 and S237. A Phosphotyrosine modification is found at Y247. 2 stretches are compositionally biased toward low complexity: residues 348-358 (SSGQSSRVSPS) and 371-384 (SPSQ…DSSS). Phosphoserine is present on residues S358, S379, and S384. Residue T387 is modified to Phosphothreonine. A phosphoserine mark is found at S461 and S465. R473 bears the Omega-N-methylarginine mark. A phosphoserine mark is found at S475 and S487. Residues 497-690 (MRKWVLSGIL…QNFLSSINEE (194 aa)) form the DH domain. Position 553 is a phosphotyrosine (Y553). T640 is modified (phosphothreonine). Phosphotyrosine is present on Y643. Phosphothreonine is present on T692. The PH domain maps to 707–865 (QLLKDSFMVE…WRESIREQQK (159 aa)). The region spanning 892 to 1019 (HHIPLTINKE…QDRDWQRTVI (128 aa)) is the C2 domain. Residues 1053-1247 (VKIAVVTKRE…VMSQVQVLLY (195 aa)) enclose the Rho-GAP domain. At S1263 the chain carries Phosphoserine.

In terms of assembly, homotetramer. Interacts with PDZK1. May interact with CCPG1. Interacts with HCK, FES/FPS, ABL1, PIK3R1 and GRB2. Interacts with SH2D5. Interacts with DLG4. Post-translationally, autophosphorylated. Phosphorylated by FES/FPS on tyrosine residues, leading to down-regulation of the BCR kinase activity. Phosphorylation by HCK is important for interaction with GRB2. As to expression, expressed in brain, including the cortex, hippocampus, cerebellum, and brainstem, as well as the spinal cord (at protein level).

It localises to the postsynaptic density. Its subcellular location is the cell projection. The protein resides in the dendritic spine. It is found in the axon. The protein localises to the synapse. It carries out the reaction L-seryl-[protein] + ATP = O-phospho-L-seryl-[protein] + ADP + H(+). The catalysed reaction is L-threonyl-[protein] + ATP = O-phospho-L-threonyl-[protein] + ADP + H(+). Functionally, protein with a unique structure having two opposing regulatory activities toward small GTP-binding proteins. The C-terminus is a GTPase-activating protein (GAP) domain which stimulates GTP hydrolysis by RAC1, RAC2 and CDC42. Accelerates the intrinsic rate of GTP hydrolysis of RAC1 or CDC42, leading to down-regulation of the active GTP-bound form. The central Dbl homology (DH) domain functions as guanine nucleotide exchange factor (GEF) that modulates the GTPases CDC42, RHOA and RAC1. Promotes the conversion of CDC42, RHOA and RAC1 from the GDP-bound to the GTP-bound form. The amino terminus contains an intrinsic kinase activity. Functions as an important negative regulator of neuronal RAC1 activity. Regulates macrophage functions such as CSF1-directed motility and phagocytosis through the modulation of RAC1 activity. Plays a major role as a RHOA GEF in keratinocytes being involved in focal adhesion formation and keratinocyte differentiation. The polypeptide is Breakpoint cluster region protein (Rattus norvegicus (Rat)).